The chain runs to 590 residues: Protein ecdysoneless homolog (590 aa).

The disordered stretch occupies residues 445–464; the sequence is EDFYGVKNSDTDTDSDSLAD. Residues 455 to 464 are compositionally biased toward acidic residues; that stretch reads TDTDSDSLAD.

Belongs to the ECD family.

The protein localises to the cytoplasm. Its subcellular location is the nucleus. Its function is as follows. Involved in the regulation of carbohydrate metabolism. May act as a transcription factor. The polypeptide is Protein ecdysoneless homolog (Schizosaccharomyces pombe (strain 972 / ATCC 24843) (Fission yeast)).